Here is a 369-residue protein sequence, read N- to C-terminus: tRNA(Met) cytidine acetate ligase (369 aa).

ATP is bound by residues 7 to 20 (VAEFNPFHNGHKYL), glycine 96, asparagine 152, and arginine 175.

Belongs to the TmcAL family.

It is found in the cytoplasm. The enzyme catalyses cytidine(34) in elongator tRNA(Met) + acetate + ATP = N(4)-acetylcytidine(34) in elongator tRNA(Met) + AMP + diphosphate. Functionally, catalyzes the formation of N(4)-acetylcytidine (ac(4)C) at the wobble position of elongator tRNA(Met), using acetate and ATP as substrates. First activates an acetate ion to form acetyladenylate (Ac-AMP) and then transfers the acetyl group to tRNA to form ac(4)C34. This Streptococcus agalactiae serotype III (strain NEM316) protein is tRNA(Met) cytidine acetate ligase.